We begin with the raw amino-acid sequence, 230 residues long: UPF0173 metal-dependent hydrolase Dshi_2788 (230 aa).

This sequence belongs to the UPF0173 family.

This is UPF0173 metal-dependent hydrolase Dshi_2788 from Dinoroseobacter shibae (strain DSM 16493 / NCIMB 14021 / DFL 12).